The primary structure comprises 346 residues: 2,5-dichlorohydroquinone reductive dechlorinase (346 aa).

The GST N-terminal domain maps to 43–154; the sequence is PRFELFHFVF…YLCDALSGGT (112 aa). A GST C-terminal domain is found at 189-335; the sequence is DRRPESMQAV…AIIQWPGHPP (147 aa).

This sequence belongs to the GST superfamily.

The enzyme catalyses 2,5-dichlorohydroquinone + 2 glutathione = chlorohydroquinone + glutathione disulfide + chloride + H(+). It carries out the reaction chlorohydroquinone + 2 glutathione = hydroquinone + glutathione disulfide + chloride + H(+). Its pathway is xenobiotic degradation; gamma-hexachlorocyclohexane degradation. In terms of biological role, catalyzes the degradation of 2,5-dichlorohydroquinone (2,5-DCHQ) into hydroquinone (HQ) via chlorohydroquinone (CHQ). The sequence is that of 2,5-dichlorohydroquinone reductive dechlorinase from Sphingobium indicum (strain DSM 16412 / CCM 7286 / MTCC 6364 / B90A).